A 337-amino-acid polypeptide reads, in one-letter code: Diacylglycerol O-acyltransferase 2-like protein 6 (337 aa).

The next 2 helical transmembrane spans lie at 22-42 (MPVY…FLVF) and 102-122 (YIIA…NFAT).

It belongs to the diacylglycerol acyltransferase family.

It localises to the endoplasmic reticulum membrane. The enzyme catalyses 1,2-di-(9Z-octadecenoyl)-sn-glycerol + (9Z)-octadecenoyl-CoA = 1,2,3-tri-(9Z-octadecenoyl)-glycerol + CoA. Functionally, diglyceride acyltransferase that uses fatty acyl-CoA as substrate. Particularly active with oleate as a substrate. Has no wax synthase activity to produce wax esters. The polypeptide is Diacylglycerol O-acyltransferase 2-like protein 6 (DGAT2L6) (Bos taurus (Bovine)).